An 830-amino-acid chain; its full sequence is DNA replication licensing factor mcm2 (830 aa).

Residues 1 to 45 are disordered; sequence MDSFRKRGRRDSESLPFESENSSLGATPLSLPPSSPPPEFSDEAA. Over residues 30-39 the composition is skewed to pro residues; it reads SLPPSSPPPE. Residues 334–360 form a C4-type zinc finger; sequence CTKCGATLGPFFQDSSVEVKISFCHNC. An MCM domain is found at 484–691; sequence IHNRIIASMA…IDEQLANFVV (208 aa). 534–541 contributes to the ATP binding site; the sequence is GDPGTAKS. An Arginine finger motif is present at residues 666–669; that stretch reads SRFD.

This sequence belongs to the MCM family. In terms of assembly, component of the mcm2-7 complex. The complex forms a toroidal hexameric ring with the proposed subunit order mcm2-mcm6-mcm4-mcm7-mcm3-mcm5. The heterodimers of mcm4/mcm6 and mcm3/mcm5 interact with mcm2 and mcm7. Interacts with mcm10.

It localises to the nucleus. It carries out the reaction ATP + H2O = ADP + phosphate + H(+). In terms of biological role, acts as a component of the mcm2-7 complex (mcm complex) which is the putative replicative helicase essential for 'once per cell cycle' DNA replication initiation and elongation in eukaryotic cells. The active ATPase sites in the mcm2-7 ring are formed through the interaction surfaces of two neighboring subunits such that a critical structure of a conserved arginine finger motif is provided in trans relative to the ATP-binding site of the Walker A box of the adjacent subunit. The six ATPase active sites, however, are likely to contribute differentially to the complex helicase activity. Plays an important role in DNA replication. This Schizosaccharomyces pombe (strain 972 / ATCC 24843) (Fission yeast) protein is DNA replication licensing factor mcm2 (mcm2).